The following is a 335-amino-acid chain: MIERIYLAKPRGFCAGVVMAIQAVEKAAVREDKPVTVYHSIVHNHTVVERLSEGGRVHFVEDLDAVDALPDSGDTVIFSAHGISPAVRERARSLGLSTIDATCPLVTKVHTEAKKYAREGYTILLIGDSAGHQEVIGTRGEAPENTILVGVLGKTGPGLNDPHAVQVPDPERLVVLTQTTLSVDDTRKTVDILKARFPALVVPPSEDLCYATKNRQDAVKNIAPNVDAFLVLTSTHSSNGMRLLELAEAECGRAYRLETAADLTRLEQNGDLGGVRSVGITSAASTPDDLVQDVVAHFRALNPALEVIEEGEWENIEFREPKKIAPTQELPRTMQ.

Cysteine 14 is a binding site for [4Fe-4S] cluster. (2E)-4-hydroxy-3-methylbut-2-enyl diphosphate is bound by residues histidine 43 and histidine 81. Histidine 43 and histidine 81 together coordinate dimethylallyl diphosphate. 2 residues coordinate isopentenyl diphosphate: histidine 43 and histidine 81. Position 103 (cysteine 103) interacts with [4Fe-4S] cluster. Histidine 132 lines the (2E)-4-hydroxy-3-methylbut-2-enyl diphosphate pocket. Histidine 132 is a binding site for dimethylallyl diphosphate. Histidine 132 serves as a coordination point for isopentenyl diphosphate. The Proton donor role is filled by glutamate 134. (2E)-4-hydroxy-3-methylbut-2-enyl diphosphate is bound at residue threonine 179. Cysteine 209 is a [4Fe-4S] cluster binding site. 4 residues coordinate (2E)-4-hydroxy-3-methylbut-2-enyl diphosphate: serine 237, serine 238, asparagine 239, and serine 285. Positions 237, 238, 239, and 285 each coordinate dimethylallyl diphosphate. Residues serine 237, serine 238, asparagine 239, and serine 285 each contribute to the isopentenyl diphosphate site.

Belongs to the IspH family. [4Fe-4S] cluster is required as a cofactor.

The enzyme catalyses isopentenyl diphosphate + 2 oxidized [2Fe-2S]-[ferredoxin] + H2O = (2E)-4-hydroxy-3-methylbut-2-enyl diphosphate + 2 reduced [2Fe-2S]-[ferredoxin] + 2 H(+). The catalysed reaction is dimethylallyl diphosphate + 2 oxidized [2Fe-2S]-[ferredoxin] + H2O = (2E)-4-hydroxy-3-methylbut-2-enyl diphosphate + 2 reduced [2Fe-2S]-[ferredoxin] + 2 H(+). It participates in isoprenoid biosynthesis; dimethylallyl diphosphate biosynthesis; dimethylallyl diphosphate from (2E)-4-hydroxy-3-methylbutenyl diphosphate: step 1/1. The protein operates within isoprenoid biosynthesis; isopentenyl diphosphate biosynthesis via DXP pathway; isopentenyl diphosphate from 1-deoxy-D-xylulose 5-phosphate: step 6/6. Catalyzes the conversion of 1-hydroxy-2-methyl-2-(E)-butenyl 4-diphosphate (HMBPP) into a mixture of isopentenyl diphosphate (IPP) and dimethylallyl diphosphate (DMAPP). Acts in the terminal step of the DOXP/MEP pathway for isoprenoid precursor biosynthesis. The sequence is that of 4-hydroxy-3-methylbut-2-enyl diphosphate reductase from Deinococcus radiodurans (strain ATCC 13939 / DSM 20539 / JCM 16871 / CCUG 27074 / LMG 4051 / NBRC 15346 / NCIMB 9279 / VKM B-1422 / R1).